Consider the following 201-residue polypeptide: Large ribosomal subunit protein uL4 (201 aa).

Residues 39 to 67 (ARQGSRAQKTRSEVAGGGRKPWKQKGSGR) are disordered.

It belongs to the universal ribosomal protein uL4 family. In terms of assembly, part of the 50S ribosomal subunit.

In terms of biological role, one of the primary rRNA binding proteins, this protein initially binds near the 5'-end of the 23S rRNA. It is important during the early stages of 50S assembly. It makes multiple contacts with different domains of the 23S rRNA in the assembled 50S subunit and ribosome. Its function is as follows. Forms part of the polypeptide exit tunnel. This is Large ribosomal subunit protein uL4 from Marinomonas sp. (strain MWYL1).